A 428-amino-acid chain; its full sequence is Adenylosuccinate synthetase (428 aa).

GTP-binding positions include 12-18 and 40-42; these read GDEGKGK and GHT. The Proton acceptor role is filled by D13. Residues D13 and G40 each coordinate Mg(2+). Residues 13 to 16, 38 to 41, T129, R143, Q224, T239, and R303 contribute to the IMP site; these read DEGK and NAGH. The Proton donor role is filled by H41. A substrate-binding site is contributed by 299 to 305; it reads VTTGRIR. GTP-binding positions include R305, 331–333, and 410–412; these read KVD and AYG.

This sequence belongs to the adenylosuccinate synthetase family. Homodimer. Requires Mg(2+) as cofactor.

It localises to the cytoplasm. The enzyme catalyses IMP + L-aspartate + GTP = N(6)-(1,2-dicarboxyethyl)-AMP + GDP + phosphate + 2 H(+). It functions in the pathway purine metabolism; AMP biosynthesis via de novo pathway; AMP from IMP: step 1/2. Functionally, plays an important role in the de novo pathway of purine nucleotide biosynthesis. Catalyzes the first committed step in the biosynthesis of AMP from IMP. The sequence is that of Adenylosuccinate synthetase from Francisella philomiragia subsp. philomiragia (strain ATCC 25017 / CCUG 19701 / FSC 153 / O#319-036).